The sequence spans 104 residues: Replication restart protein PriB (104 aa).

In terms of domain architecture, SSB spans 1–101; that stretch reads MTNRLELSGI…LHAEQIELID (101 aa).

This sequence belongs to the PriB family. As to quaternary structure, homodimer. Interacts with DnaT. Interacts with PriA. Component of the replication restart primosome. Primosome assembly occurs via a 'hand-off' mechanism. PriA binds to replication forks, subsequently PriB then DnaT bind; DnaT then displaces ssDNA to generate the helicase loading substrate.

Its function is as follows. Involved in the restart of stalled replication forks, which reloads the replicative helicase on sites far from the origin of replication; the PriA-PriB pathway is the major replication restart pathway. During primosome assembly it facilitates complex formation between PriA and DnaT on DNA; stabilizes PriA on DNA. Stimulates the DNA unwinding activity of PriA helicase. In terms of biological role, binds single-stranded (ss)DNA at the primosome assembly site (PAS). One study finds it binds 15 nucleotide (nt) ssDNA. Another study finds the minimal ssDNA length for binding to PriB is 25 nt; prefers dT(30) over dA(30). Also binds 22 nt dsDNA. This is Replication restart protein PriB from Klebsiella pneumoniae subsp. pneumoniae (strain ATCC 700721 / MGH 78578).